A 320-amino-acid polypeptide reads, in one-letter code: SUMO-activating enzyme subunit 1B-1 (320 aa).

Met1 is subject to N-acetylmethionine.

This sequence belongs to the ubiquitin-activating E1 family. In terms of assembly, heterodimer of SAE1A or SAE1B and SAE2. The complex binds SUMO proteins via SAE2.

Its subcellular location is the nucleus. It participates in protein modification; protein sumoylation. In terms of biological role, the dimeric enzyme acts as an E1 ligase for SUMO1 and SUMO2. It mediates ATP-dependent activation of SUMO proteins and formation of a thioester with a conserved cysteine residue on SAE2. Functionally redundant with its paralog SAE1A. In Arabidopsis thaliana (Mouse-ear cress), this protein is SUMO-activating enzyme subunit 1B-1 (SAE1B-1).